The sequence spans 513 residues: Carotenoid isomerooxygenase (513 aa).

His184, His242, His312, and His503 together coordinate Fe cation.

Belongs to the carotenoid oxygenase family. Fe(2+) is required as a cofactor.

It catalyses the reaction all-trans-zeaxanthin + O2 = (3R)-11-cis-3-hydroxyretinal + (3R)-all-trans-3-hydroxyretinal. The protein operates within cofactor metabolism; retinol metabolism. Its function is as follows. Catalyzes the oxidative cleavage at the 15,15'-double bond of carotenoids and the simultaneous all-trans to 11-cis isomerization of one cleavage product. Carotenoids like 11-cis retinal can promote visual pigment biogenesis in the dark. Essential for the biosynthesis of the 3-hydroxyretinal chromophore of rhodopsin from zeaxanthin and for proper photoreceptor development. In Galleria mellonella (Greater wax moth), this protein is Carotenoid isomerooxygenase (ninaB).